The following is a 119-amino-acid chain: Small ribosomal subunit protein uS13 (119 aa).

Positions 92 to 119 (RRGLPVRGQRTKTNARTRKGPRKAIRAR) are disordered.

Belongs to the universal ribosomal protein uS13 family. As to quaternary structure, part of the 30S ribosomal subunit. Forms a loose heterodimer with protein S19. Forms two bridges to the 50S subunit in the 70S ribosome.

Located at the top of the head of the 30S subunit, it contacts several helices of the 16S rRNA. In the 70S ribosome it contacts the 23S rRNA (bridge B1a) and protein L5 of the 50S subunit (bridge B1b), connecting the 2 subunits; these bridges are implicated in subunit movement. Contacts the tRNAs in the A and P-sites. In Nitrosomonas eutropha (strain DSM 101675 / C91 / Nm57), this protein is Small ribosomal subunit protein uS13.